The sequence spans 108 residues: Thiosulfate sulfurtransferase GlpE (108 aa).

Positions 17-105 constitute a Rhodanese domain; that stretch reads QEKEAVLVDI…WQRQFPAEVA (89 aa). Cys-65 serves as the catalytic Cysteine persulfide intermediate.

Belongs to the GlpE family.

Its subcellular location is the cytoplasm. The catalysed reaction is thiosulfate + hydrogen cyanide = thiocyanate + sulfite + 2 H(+). The enzyme catalyses thiosulfate + [thioredoxin]-dithiol = [thioredoxin]-disulfide + hydrogen sulfide + sulfite + 2 H(+). In terms of biological role, transferase that catalyzes the transfer of sulfur from thiosulfate to thiophilic acceptors such as cyanide or dithiols. May function in a CysM-independent thiosulfate assimilation pathway by catalyzing the conversion of thiosulfate to sulfite, which can then be used for L-cysteine biosynthesis. The chain is Thiosulfate sulfurtransferase GlpE from Escherichia coli O157:H7.